The following is a 466-amino-acid chain: NADH-quinone oxidoreductase subunit N (466 aa).

14 helical membrane passes run 9 to 29, 33 to 53, 68 to 88, 100 to 120, 122 to 142, 157 to 177, 190 to 210, 232 to 252, 263 to 283, 289 to 309, 314 to 334, 359 to 379, 394 to 416, and 438 to 458; these read LIPL…GAIV, CGTV…MLAP, PFTR…LLLA, EEYP…ASAA, FLTL…LVAY, LLMG…LYGA, SAAG…GLAF, VVAF…LLIL, APLW…ALLQ, MLAY…LSGG, AAAF…GALA, GVVL…VGFV, APLA…RVVV, and LSLG…GPLF.

Belongs to the complex I subunit 2 family. NDH-1 is composed of 14 different subunits. Subunits NuoA, H, J, K, L, M, N constitute the membrane sector of the complex.

It is found in the cell inner membrane. It catalyses the reaction a quinone + NADH + 5 H(+)(in) = a quinol + NAD(+) + 4 H(+)(out). NDH-1 shuttles electrons from NADH, via FMN and iron-sulfur (Fe-S) centers, to quinones in the respiratory chain. The immediate electron acceptor for the enzyme in this species is believed to be ubiquinone. Couples the redox reaction to proton translocation (for every two electrons transferred, four hydrogen ions are translocated across the cytoplasmic membrane), and thus conserves the redox energy in a proton gradient. This Geobacter metallireducens (strain ATCC 53774 / DSM 7210 / GS-15) protein is NADH-quinone oxidoreductase subunit N.